The following is a 73-amino-acid chain: Putative neurotoxin NaH-Cpp1a (73 aa).

Residues 1 to 23 (MKSFYGILCVAVLMMFHLEMSES) form the signal peptide. 3 cysteine pairs are disulfide-bonded: C43–C58, C50–C63, and C57–C70.

As to expression, expressed outside of acontia.

The protein localises to the secreted. It is found in the nematocyst. Functionally, putative neurotoxin. The chain is Putative neurotoxin NaH-Cpp1a from Calliactis polypus (Hermit crab anemone).